A 55-amino-acid polypeptide reads, in one-letter code: ATP synthase F(0) complex subunit 8 (55 aa).

The helical transmembrane segment at 9–29 (WFFIMIMSWAVFLLLIQPKLL) threads the bilayer.

This sequence belongs to the ATPase protein 8 family. As to quaternary structure, component of the ATP synthase complex composed at least of ATP5F1A/subunit alpha, ATP5F1B/subunit beta, ATP5MC1/subunit c (homooctomer), MT-ATP6/subunit a, MT-ATP8/subunit 8, ATP5ME/subunit e, ATP5MF/subunit f, ATP5MG/subunit g, ATP5MK/subunit k, ATP5MJ/subunit j, ATP5F1C/subunit gamma, ATP5F1D/subunit delta, ATP5F1E/subunit epsilon, ATP5PF/subunit F6, ATP5PB/subunit b, ATP5PD/subunit d, ATP5PO/subunit OSCP. ATP synthase complex consists of a soluble F(1) head domain (subunits alpha(3) and beta(3)) - the catalytic core - and a membrane F(0) domain - the membrane proton channel (subunits c, a, 8, e, f, g, k and j). These two domains are linked by a central stalk (subunits gamma, delta, and epsilon) rotating inside the F1 region and a stationary peripheral stalk (subunits F6, b, d, and OSCP).

The protein localises to the mitochondrion membrane. Its function is as follows. Subunit 8, of the mitochondrial membrane ATP synthase complex (F(1)F(0) ATP synthase or Complex V) that produces ATP from ADP in the presence of a proton gradient across the membrane which is generated by electron transport complexes of the respiratory chain. ATP synthase complex consist of a soluble F(1) head domain - the catalytic core - and a membrane F(1) domain - the membrane proton channel. These two domains are linked by a central stalk rotating inside the F(1) region and a stationary peripheral stalk. During catalysis, ATP synthesis in the catalytic domain of F(1) is coupled via a rotary mechanism of the central stalk subunits to proton translocation. In vivo, can only synthesize ATP although its ATP hydrolase activity can be activated artificially in vitro. Part of the complex F(0) domain. The chain is ATP synthase F(0) complex subunit 8 from Rhea americana (Greater rhea).